Here is a 387-residue protein sequence, read N- to C-terminus: Putative glutamate--cysteine ligase 2 (387 aa).

It belongs to the glutamate--cysteine ligase type 2 family. YbdK subfamily.

The catalysed reaction is L-cysteine + L-glutamate + ATP = gamma-L-glutamyl-L-cysteine + ADP + phosphate + H(+). Functionally, ATP-dependent carboxylate-amine ligase which exhibits weak glutamate--cysteine ligase activity. In Pseudomonas fluorescens (strain ATCC BAA-477 / NRRL B-23932 / Pf-5), this protein is Putative glutamate--cysteine ligase 2.